The chain runs to 353 residues: Melanin-concentrating hormone receptor 1 (353 aa).

The segment at 1–26 (MDLQTSLLSTGPNASNISDGQDNLTL) is disordered. Topologically, residues 1–45 (MDLQTSLLSTGPNASNISDGQDNLTLPGSPPRTGSVSYINIIMPS) are extracellular. 3 N-linked (GlcNAc...) asparagine glycosylation sites follow: Asn13, Asn16, and Asn23. The helical transmembrane segment at 46–66 (VFGTICLLGIVGNSTVIFAVV) threads the bilayer. Topologically, residues 67-79 (KKSKLHWCSNVPD) are cytoplasmic. A helical transmembrane segment spans residues 80 to 100 (IFIINLSVVDLLFLLGMPFMI). The Extracellular portion of the chain corresponds to 101–116 (HQLMGNGVWHFGETMC). Cys116 and Cys194 are disulfide-bonded. A helical transmembrane segment spans residues 117-139 (TLITAMDANSQFTSTYILTAMTI). At 140-161 (DRYLATVHPISSTKFRKPSMAT) the chain is on the cytoplasmic side. A helical membrane pass occupies residues 162 to 182 (LVICLLWALSFISITPVWLYA). The Extracellular segment spans residues 183-204 (RLIPFPGGAVGCGIRLPNPDTD). A helical transmembrane segment spans residues 205-225 (LYWFTLYQFFLAFALPFVVIT). The Cytoplasmic segment spans residues 226–256 (AAYVKILQRMTSSVAPASQRSIRLRTKRVTR). A helical membrane pass occupies residues 257–277 (TAIAICLVFFVCWAPYYVLQL). Residues 278-294 (TQLSISRPTLTFVYLYN) are Extracellular-facing. Residues 295 to 315 (AAISLGYANSCLNPFVYIVLC) form a helical membrane-spanning segment. Residues 316-353 (ETFRKRLVLSVKPAAQGQLRTVSNAQTADEERTESKGT) are Cytoplasmic-facing.

Belongs to the G-protein coupled receptor 1 family. As to quaternary structure, interacts with NCDN. High level in the brain, moderate amounts in the eye and skeletal muscle, and small amounts in tongue and pituitary.

The protein localises to the cell membrane. Receptor for melanin-concentrating hormone, coupled to G proteins that inhibit adenylyl cyclase. The protein is Melanin-concentrating hormone receptor 1 of Rattus norvegicus (Rat).